The chain runs to 144 residues: Cytochrome c oxidase subunit 4 isoform 1, mitochondrial (144 aa).

Residues 1–73 (SVVKSEDFTL…SFAEMNRRSN (73 aa)) are Mitochondrial matrix-facing. Position 4 is an N6-acetyllysine; alternate (Lys4). Residue Lys4 is modified to N6-succinyllysine; alternate. Lys28 bears the N6-acetyllysine mark. Phosphoserine occurs at positions 31 and 33. Lys35 is modified (N6-acetyllysine; alternate). Residue Lys35 is modified to N6-succinyllysine; alternate. Lys42 carries the post-translational modification N6-acetyllysine. Residues 74-99 (EWKTVVGTAMFFFGITALIVMWEKRY) form a helical membrane-spanning segment. Residues 100-144 (VYGPLPQTFDKEWVAMQTKRMLDMKVNPIQGLASKWDYEKNEWKK) are Mitochondrial intermembrane-facing.

This sequence belongs to the cytochrome c oxidase IV family. As to quaternary structure, component of the cytochrome c oxidase (complex IV, CIV), a multisubunit enzyme composed of 14 subunits. The complex is composed of a catalytic core of 3 subunits MT-CO1, MT-CO2 and MT-CO3, encoded in the mitochondrial DNA, and 11 supernumerary subunits COX4I, COX5A, COX5B, COX6A, COX6B, COX6C, COX7A, COX7B, COX7C, COX8 and NDUFA4, which are encoded in the nuclear genome. The complex exists as a monomer or a dimer and forms supercomplexes (SCs) in the inner mitochondrial membrane with NADH-ubiquinone oxidoreductase (complex I, CI) and ubiquinol-cytochrome c oxidoreductase (cytochrome b-c1 complex, complex III, CIII), resulting in different assemblies (supercomplex SCI(1)III(2)IV(1) and megacomplex MCI(2)III(2)IV(2)). Interacts with PHB2; the interaction decreases in absence of SPHK2. Interacts with AFG1L. Interacts with ABCB7; this interaction allows the regulation of cellular iron homeostasis and cellular reactive oxygen species (ROS) levels in cardiomyocytes. Interacts with FLVCR2; this interaction occurs in the absence of heme and is disrupted upon heme binding. Interacts with IRGC.

The protein localises to the mitochondrion inner membrane. It participates in energy metabolism; oxidative phosphorylation. Functionally, component of the cytochrome c oxidase, the last enzyme in the mitochondrial electron transport chain which drives oxidative phosphorylation. The respiratory chain contains 3 multisubunit complexes succinate dehydrogenase (complex II, CII), ubiquinol-cytochrome c oxidoreductase (cytochrome b-c1 complex, complex III, CIII) and cytochrome c oxidase (complex IV, CIV), that cooperate to transfer electrons derived from NADH and succinate to molecular oxygen, creating an electrochemical gradient over the inner membrane that drives transmembrane transport and the ATP synthase. Cytochrome c oxidase is the component of the respiratory chain that catalyzes the reduction of oxygen to water. Electrons originating from reduced cytochrome c in the intermembrane space (IMS) are transferred via the dinuclear copper A center (CU(A)) of subunit 2 and heme A of subunit 1 to the active site in subunit 1, a binuclear center (BNC) formed by heme A3 and copper B (CU(B)). The BNC reduces molecular oxygen to 2 water molecules using 4 electrons from cytochrome c in the IMS and 4 protons from the mitochondrial matrix. This Theropithecus gelada (Gelada baboon) protein is Cytochrome c oxidase subunit 4 isoform 1, mitochondrial (COX4I1).